Reading from the N-terminus, the 350-residue chain is Phenylalanine--tRNA ligase alpha subunit (350 aa).

Glu-271 provides a ligand contact to Mg(2+).

Belongs to the class-II aminoacyl-tRNA synthetase family. Phe-tRNA synthetase alpha subunit type 1 subfamily. As to quaternary structure, tetramer of two alpha and two beta subunits. Mg(2+) is required as a cofactor.

Its subcellular location is the cytoplasm. The enzyme catalyses tRNA(Phe) + L-phenylalanine + ATP = L-phenylalanyl-tRNA(Phe) + AMP + diphosphate + H(+). The sequence is that of Phenylalanine--tRNA ligase alpha subunit from Acidovorax ebreus (strain TPSY) (Diaphorobacter sp. (strain TPSY)).